A 916-amino-acid chain; its full sequence is Protein O-GlcNAcase (916 aa).

The interval 1–46 is disordered; sequence MVQKESQAALEERESERNANPAAASGASLEQSVAPAPGEDNPSGAG. A GH84 domain is found at 60–336; the sequence is FLCGVVEGFY…TLATWYKSNM (277 aa). Glycine 67, lysine 98, and aspartate 174 together coordinate a protein. Aspartate 175 serves as the catalytic Proton donor. A protein-binding positions include tyrosine 219, 278–280, aspartate 285, and asparagine 313; that span reads WDN. Serine 364 is subject to Phosphoserine. Residues 443-465 form a disordered region; sequence ALSGEPSVLTKEEEKKQPDEEPM. Basic and acidic residues predominate over residues 452–461; sequence TKEEEKKQPD.

The protein belongs to the glycosyl hydrolase 84 family. As to quaternary structure, monomer. Interacts with CLOCK. Post-translationally, proteolytically cleaved by caspase-3 during apoptosis. The fragments interact with each other; cleavage does not decrease enzyme activity.

It is found in the cytoplasm. The protein localises to the nucleus. The enzyme catalyses 3-O-(N-acetyl-beta-D-glucosaminyl)-L-seryl-[protein] + H2O = N-acetyl-D-glucosamine + L-seryl-[protein]. It carries out the reaction 3-O-(N-acetyl-beta-D-glucosaminyl)-L-threonyl-[protein] + H2O = L-threonyl-[protein] + N-acetyl-D-glucosamine. Cleaves GlcNAc but not GalNAc from O-glycosylated proteins. Deglycosylates a large and diverse number of proteins, such as CRYAB, ELK1, GSDMD, LMNB1 and TAB1. Can use p-nitrophenyl-beta-GlcNAc and 4-methylumbelliferone-GlcNAc as substrates but not p-nitrophenyl-beta-GalNAc or p-nitrophenyl-alpha-GlcNAc (in vitro). Does not bind acetyl-CoA and does not have histone acetyltransferase activity. The polypeptide is Protein O-GlcNAcase (Mus musculus (Mouse)).